The primary structure comprises 446 residues: MKNISDLWNQALGQIEKKLSKPSFETWMKSTKAHSLQGDTLIITAPNEFARDWLESRYLHLIADTIYDLTGEELSIKFVIPQNQNEEDFMPKSPIKKMSKEEPADFPQNMLNPKYTFDTFVIGSGNRFAHAASLAVAEAPAKAYNPLFIYGGVGLGKTHLMHAIGHYVIDHNPSAKVVYLSSEKFTNEFINSIRDNKAVDFRNRYRNVDVLLIDDIQFLAGKEQTQEEFFHTFNTLHEETKQIVISSDRPPKEIPTLEDRLRSRFEWGLITDITPPDLETRIAILRKKAKAEGLDIPNEVMLYIANQIDSNIRELEGALIRVVAYSSLINKDINADLAAEALKDIIPSSKPKVITIKDIQRIVGQQFNIKLEDFKAKKRTKSVAFPRQIAMYLSREMTDSSLPKIGEEFGGRDHTTVIHAHEKISKLLSDDEQLQQQIKEIKEQLR.

The segment at 1 to 72 (MKNISDLWNQ…ADTIYDLTGE (72 aa)) is domain I, interacts with DnaA modulators. The interval 72–109 (EELSIKFVIPQNQNEEDFMPKSPIKKMSKEEPADFPQN) is domain II. The domain III, AAA+ region stretch occupies residues 110 to 326 (MLNPKYTFDT…GALIRVVAYS (217 aa)). Residues G154, G156, K157, and T158 each contribute to the ATP site. The domain IV, binds dsDNA stretch occupies residues 327–446 (SLINKDINAD…QIKEIKEQLR (120 aa)).

The protein belongs to the DnaA family. Oligomerizes as a right-handed, spiral filament on DNA at oriC.

It is found in the cytoplasm. Plays an essential role in the initiation and regulation of chromosomal replication. ATP-DnaA binds to the origin of replication (oriC) to initiate formation of the DNA replication initiation complex once per cell cycle. Binds the DnaA box (a 9 base pair repeat at the origin) and separates the double-stranded (ds)DNA. Forms a right-handed helical filament on oriC DNA; dsDNA binds to the exterior of the filament while single-stranded (ss)DNA is stabiized in the filament's interior. The ATP-DnaA-oriC complex binds and stabilizes one strand of the AT-rich DNA unwinding element (DUE), permitting loading of DNA polymerase. After initiation quickly degrades to an ADP-DnaA complex that is not apt for DNA replication. Binds acidic phospholipids. The protein is Chromosomal replication initiator protein DnaA of Bacillus licheniformis (strain ATCC 14580 / DSM 13 / JCM 2505 / CCUG 7422 / NBRC 12200 / NCIMB 9375 / NCTC 10341 / NRRL NRS-1264 / Gibson 46).